The chain runs to 246 residues: Acetoacetate decarboxylase (246 aa).

The Schiff-base intermediate with acetoacetate role is filled by lysine 115.

The protein belongs to the ADC family.

It catalyses the reaction acetoacetate + H(+) = acetone + CO2. Functionally, catalyzes the conversion of acetoacetate to acetone and carbon dioxide. The chain is Acetoacetate decarboxylase from Clostridium beijerinckii (strain ATCC 51743 / NCIMB 8052) (Clostridium acetobutylicum).